A 103-amino-acid polypeptide reads, in one-letter code: NADH dehydrogenase [ubiquinone] 1 beta subcomplex subunit 7 (103 aa).

The CHCH domain occupies 27-69; that stretch reads RDMCAHLLIPLNKCRQAEFYLPWKCEDERHVYEKCEYELVMER. Short sequence motifs (cx9C motif) lie at residues 30 to 40 and 51 to 61; these read CAHLLIPLNKC and CEDERHVYEKC. 2 disulfide bridges follow: cysteine 30–cysteine 61 and cysteine 40–cysteine 51.

Belongs to the complex I NDUFB7 subunit family. Complex I is composed of at least 49 different subunits.

The protein localises to the mitochondrion. It is found in the mitochondrion inner membrane. It localises to the mitochondrion intermembrane space. Accessory subunit of the mitochondrial membrane respiratory chain NADH dehydrogenase (Complex I), that is believed not to be involved in catalysis. Complex I functions in the transfer of electrons from NADH to the respiratory chain. The immediate electron acceptor for the enzyme is believed to be ubiquinone. This is NADH dehydrogenase [ubiquinone] 1 beta subcomplex subunit 7 from Arabidopsis thaliana (Mouse-ear cress).